The primary structure comprises 873 residues: Alanine--tRNA ligase (873 aa).

Zn(2+)-binding residues include His-559, His-563, Cys-661, and His-665.

Belongs to the class-II aminoacyl-tRNA synthetase family. It depends on Zn(2+) as a cofactor.

It localises to the cytoplasm. It carries out the reaction tRNA(Ala) + L-alanine + ATP = L-alanyl-tRNA(Ala) + AMP + diphosphate. Its function is as follows. Catalyzes the attachment of alanine to tRNA(Ala) in a two-step reaction: alanine is first activated by ATP to form Ala-AMP and then transferred to the acceptor end of tRNA(Ala). Also edits incorrectly charged Ser-tRNA(Ala) and Gly-tRNA(Ala) via its editing domain. In Acaryochloris marina (strain MBIC 11017), this protein is Alanine--tRNA ligase.